We begin with the raw amino-acid sequence, 292 residues long: 4-hydroxy-tetrahydrodipicolinate synthase (292 aa).

A pyruvate-binding site is contributed by T45. Residue Y133 is the Proton donor/acceptor of the active site. K161 (schiff-base intermediate with substrate) is an active-site residue. I203 is a binding site for pyruvate.

The protein belongs to the DapA family. Homotetramer; dimer of dimers.

It is found in the cytoplasm. The enzyme catalyses L-aspartate 4-semialdehyde + pyruvate = (2S,4S)-4-hydroxy-2,3,4,5-tetrahydrodipicolinate + H2O + H(+). The protein operates within amino-acid biosynthesis; L-lysine biosynthesis via DAP pathway; (S)-tetrahydrodipicolinate from L-aspartate: step 3/4. In terms of biological role, catalyzes the condensation of (S)-aspartate-beta-semialdehyde [(S)-ASA] and pyruvate to 4-hydroxy-tetrahydrodipicolinate (HTPA). The protein is 4-hydroxy-tetrahydrodipicolinate synthase of Acidiphilium cryptum (strain JF-5).